The chain runs to 298 residues: Acetylglutamate kinase (298 aa).

Substrate is bound by residues 69-70, arginine 91, and asparagine 196; that span reads GG.

The protein belongs to the acetylglutamate kinase family. ArgB subfamily.

Its subcellular location is the cytoplasm. The catalysed reaction is N-acetyl-L-glutamate + ATP = N-acetyl-L-glutamyl 5-phosphate + ADP. Its pathway is amino-acid biosynthesis; L-arginine biosynthesis; N(2)-acetyl-L-ornithine from L-glutamate: step 2/4. Catalyzes the ATP-dependent phosphorylation of N-acetyl-L-glutamate. This is Acetylglutamate kinase from Bradyrhizobium sp. (strain ORS 278).